Consider the following 206-residue polypeptide: uncharacterized protein (206 aa).

The region spanning 29-169 is the Nudix hydrolase domain; the sequence is YWHSTFHCWV…DGVFAEGFIV (141 aa). Positions 69–90 match the Nudix box motif; sequence AGHIKSGESIEDGVRELKEELG. Mg(2+) is bound by residues Glu-84 and Glu-88.

Belongs to the Nudix hydrolase family. It depends on Mg(2+) as a cofactor.

This is an uncharacterized protein from Clostridium acetobutylicum (strain ATCC 824 / DSM 792 / JCM 1419 / IAM 19013 / LMG 5710 / NBRC 13948 / NRRL B-527 / VKM B-1787 / 2291 / W).